The chain runs to 141 residues: Protein X (141 aa).

The segment at 24 to 52 is disordered; the sequence is QSSGPPFPRPAAGSAASSTSSPSPSDESD. The span at 33–48 shows a compositional bias: low complexity; the sequence is PAAGSAASSTSSPSPS. The segment at 68-113 is mitochondrial targeting sequence; the sequence is PCCLVFTCADLRTMDSTVNFVSWHAKRQLGMPSKDLWTPYIKDQLL.

It belongs to the orthohepadnavirus protein X family. As to quaternary structure, may form homodimer. May interact with host CEBPA, CFLAR, CREB1, DDB1, E4F1, HBXIP, HSPD1/HSP60, NFKBIA, POLR2E and SMAD4. Interacts with host SMC5-SMC6 complex and induces its degradation. Interacts with host TRPC4AP; leading to prevent ubiquitination of TRPC4AP. Interacts with host PLSCR1; this interaction promotes ubiquitination and degradation of HBx and impairs HBx-mediated cell proliferation. A fraction may be phosphorylated in insect cells and HepG2 cells, a human hepatoblastoma cell line. Phosphorylated in vitro by host protein kinase C or mitogen-activated protein kinase. N-acetylated in insect cells.

It localises to the host cytoplasm. The protein localises to the host nucleus. The protein resides in the host mitochondrion. Its function is as follows. Multifunctional protein that plays a role in silencing host antiviral defenses and promoting viral transcription. Does not seem to be essential for HBV infection. May be directly involved in development of cirrhosis and liver cancer (hepatocellular carcinoma). Most of cytosolic activities involve modulation of cytosolic calcium. The effect on apoptosis is controversial depending on the cell types in which the studies have been conducted. May induce apoptosis by localizing in mitochondria and causing loss of mitochondrial membrane potential. May also modulate apoptosis by binding host CFLAR, a key regulator of the death-inducing signaling complex (DISC). Promotes viral transcription by using the host E3 ubiquitin ligase DDB1 to target the SMC5-SMC6 complex to proteasomal degradation. This host complex would otherwise bind to viral episomal DNA, and prevents its transcription. Moderately stimulates transcription of many different viral and cellular transcription elements. Promoters and enhancers stimulated by HBx contain DNA binding sites for NF-kappa-B, AP-1, AP-2, c-EBP, ATF/CREB, or the calcium-activated factor NF-AT. The sequence is that of Protein X from Marmota monax (Woodchuck).